Reading from the N-terminus, the 321-residue chain is Glucokinase (321 aa).

ATP is bound at residue 8–13 (GDVGGT).

This sequence belongs to the bacterial glucokinase family.

The protein resides in the cytoplasm. The enzyme catalyses D-glucose + ATP = D-glucose 6-phosphate + ADP + H(+). This Erwinia tasmaniensis (strain DSM 17950 / CFBP 7177 / CIP 109463 / NCPPB 4357 / Et1/99) protein is Glucokinase.